A 44-amino-acid chain; its full sequence is Antimicrobial peptide 2 (44 aa).

In terms of processing, disulfide bonds. Expressed in flowers but not in leaves, seeds or roots (at protein level).

Antimicrobial peptide. Active against fungal species B.cinerea (IC(50)=5.2 uM), A.niger (IC(50)=2.6 uM) and B.sorokinina (IC(50)=5.2 uM) but not against F.oxysporum, F.graminearum and P.debaryanum at concentrations below 10 uM. Inhibits growth of P.infestans at concentration between 1.3 uM and 5.2 uM. Active against bacterial species P.syringae, B.subtilis, X.campestris and C.michiganense. This chain is Antimicrobial peptide 2, found in Taraxacum officinale (Common dandelion).